Consider the following 111-residue polypeptide: Large ribosomal subunit protein uL22 (111 aa).

Belongs to the universal ribosomal protein uL22 family. Part of the 50S ribosomal subunit.

This protein binds specifically to 23S rRNA; its binding is stimulated by other ribosomal proteins, e.g. L4, L17, and L20. It is important during the early stages of 50S assembly. It makes multiple contacts with different domains of the 23S rRNA in the assembled 50S subunit and ribosome. Functionally, the globular domain of the protein is located near the polypeptide exit tunnel on the outside of the subunit, while an extended beta-hairpin is found that lines the wall of the exit tunnel in the center of the 70S ribosome. This chain is Large ribosomal subunit protein uL22, found in Xylella fastidiosa (strain 9a5c).